Consider the following 379-residue polypeptide: RING finger protein 215 (379 aa).

Disordered stretches follow at residues 1 to 21 (MGSADRPALRSPSLPPPPPSP) and 44 to 63 (AADGSEPATGEGRGGARSVR). The Cytoplasmic segment spans residues 1–24 (MGSADRPALRSPSLPPPPPSPPSP). The helical transmembrane segment at 25 to 45 (LLLLLPLLPLWLGLMGPGAAA) threads the bilayer. The Extracellular portion of the chain corresponds to 46 to 252 (DGSEPATGEG…GGAQAQEQKP (207 aa)). N-linked (GlcNAc...) asparagine glycosylation is present at Asn188. The helical transmembrane segment at 253–273 (LQQLWNAILLVAMLLCTGLVV) threads the bilayer. The Cytoplasmic segment spans residues 274-379 (QAQRQASRQN…NVLGNHYSDD (106 aa)). Residues 327-368 (CAVCLDYFCNKQWLRVLPCKHEFHRDCVDPWLMLQQTCPLCK) form an RING-type; atypical zinc finger.

Its subcellular location is the membrane. This is RING finger protein 215 (Rnf215) from Mus musculus (Mouse).